The sequence spans 61 residues: Small ribosomal subunit protein uS14 (61 aa).

Residues Cys-24, Cys-27, Cys-40, and Cys-43 each contribute to the Zn(2+) site.

The protein belongs to the universal ribosomal protein uS14 family. Zinc-binding uS14 subfamily. Part of the 30S ribosomal subunit. Contacts proteins S3 and S10. It depends on Zn(2+) as a cofactor.

Its function is as follows. Binds 16S rRNA, required for the assembly of 30S particles and may also be responsible for determining the conformation of the 16S rRNA at the A site. The sequence is that of Small ribosomal subunit protein uS14 from Oleidesulfovibrio alaskensis (strain ATCC BAA-1058 / DSM 17464 / G20) (Desulfovibrio alaskensis).